The chain runs to 56 residues: GSICLEPKVVGPCTAYLRRFYFDSETGKCTPFIYGGCEGNGNNFETLRACRAICRA.

Residues 4–54 form the BPTI/Kunitz inhibitor domain; sequence CLEPKVVGPCTAYLRRFYFDSETGKCTPFIYGGCEGNGNNFETLRACRAIC. 3 disulfides stabilise this stretch: Cys-4-Cys-54, Cys-13-Cys-37, and Cys-29-Cys-50.

This sequence belongs to the venom Kunitz-type family. Sea anemone type 2 potassium channel toxin subfamily.

It is found in the secreted. It localises to the nematocyst. This recombinant serine protease inhibitor inhibits trypsin (Ki=210 nM). In contrast to other sea anemone serine protease inhibitors, it does not significantly blocks histamine influence on intracellular calcium concentration in murine bone marrow-derived macrophages (tested at 1 and 10 uM). In vitro, it shows cytoprotective activity in the oxidative stress agent 6-hydroxydopamine (6-OHDA)-induced neurotoxicity model. In this model, it decreases reactive oxygen species (ROS) levels, and increases cell viability in a correlated manner. It is possible that the observed effect is due to the ability of this peptides to act as free-radical scavenger. In vivo, it shows analgesic activity, since it increases hot plate and tail flick withdrawal latencies, when using a mice thermal pain stimulation model. This chain is PI-stichotoxin-Hcr2m, found in Radianthus crispa (Leathery sea anemone).